A 180-amino-acid polypeptide reads, in one-letter code: ADP-ribosylation factor 4 (180 aa).

Gly-2 is lipidated: N-myristoyl glycine. Residues Gly-24 to Thr-31, Asp-67 to Gln-71, and Asn-126 to Asp-129 each bind GTP.

Belongs to the small GTPase superfamily. Arf family.

It localises to the golgi apparatus. In terms of biological role, GTP-binding protein involved in protein trafficking; may modulate vesicle budding and uncoating within the Golgi apparatus. May be involved in ciliogenesis. This is ADP-ribosylation factor 4 (arf4) from Xenopus laevis (African clawed frog).